Here is a 197-residue protein sequence, read N- to C-terminus: Inner membrane-spanning protein YciB (197 aa).

Transmembrane regions (helical) follow at residues 22 to 42 (IYSATAALIIMVLLNVFYHWF), 48 to 68 (PSMMWITLILVMLFGGATLIF), 76 to 96 (WKPSILQWVLASGFLASHLIG), 121 to 141 (AAWVLFLLFSGALNLYVAYTF), and 144 to 164 (EIWVSFKLFGLMGLTILFLIG).

This sequence belongs to the YciB family.

It localises to the cell inner membrane. Plays a role in cell envelope biogenesis, maintenance of cell envelope integrity and membrane homeostasis. The chain is Inner membrane-spanning protein YciB from Magnetococcus marinus (strain ATCC BAA-1437 / JCM 17883 / MC-1).